We begin with the raw amino-acid sequence, 169 residues long: UPF0398 protein Spy49_1277c (169 aa).

This sequence belongs to the UPF0398 family.

This Streptococcus pyogenes serotype M49 (strain NZ131) protein is UPF0398 protein Spy49_1277c.